The sequence spans 473 residues: Chromosomal replication initiator protein DnaA (473 aa).

The tract at residues 1–76 (MNYHSTNVNE…RTVLGRVIGP (76 aa)) is domain I, interacts with DnaA modulators. Residues 76–135 (PNASLQYNALVDNSSPKYPGTVTLAGCADGGQAAEQFDVNLLHRHMPNAATHSEAQDFDT) are domain II. A domain III, AAA+ region region spans residues 136–353 (QLNSRLNFRN…GTLVSLITNS (218 aa)). ATP-binding residues include Gly181, Gly183, Lys184, and Thr185. A domain IV, binds dsDNA region spans residues 354-473 (VVVGKEIDLT…VERAEQLIAN (120 aa)).

The protein belongs to the DnaA family. Oligomerizes as a right-handed, spiral filament on DNA at oriC.

It localises to the cytoplasm. In terms of biological role, plays an essential role in the initiation and regulation of chromosomal replication. ATP-DnaA binds to the origin of replication (oriC) to initiate formation of the DNA replication initiation complex once per cell cycle. Binds the DnaA box (a 9 base pair repeat at the origin) and separates the double-stranded (ds)DNA. Forms a right-handed helical filament on oriC DNA; dsDNA binds to the exterior of the filament while single-stranded (ss)DNA is stabiized in the filament's interior. The ATP-DnaA-oriC complex binds and stabilizes one strand of the AT-rich DNA unwinding element (DUE), permitting loading of DNA polymerase. After initiation quickly degrades to an ADP-DnaA complex that is not apt for DNA replication. Binds acidic phospholipids. This Porphyromonas gingivalis (strain ATCC 33277 / DSM 20709 / CIP 103683 / JCM 12257 / NCTC 11834 / 2561) protein is Chromosomal replication initiator protein DnaA.